We begin with the raw amino-acid sequence, 764 residues long: Bifunctional type I diterpene synthase tndC (764 aa).

The interval methionine 1–tyrosine 324 is terpene cyclase. Mg(2+) is bound by residues aspartate 92 and aspartate 96. The short motif at aspartate 92–aspartate 96 is the DDXXD 1 element. Positions asparagine 224 to glutamate 232 match the NSE/DTE motif. Residues asparagine 325–leucine 761 form a prenyltransferase region. The interval alanine 377 to valine 403 is disordered. A compositionally biased stretch (polar residues) spans asparagine 381–glycine 391. Isopentenyl diphosphate contacts are provided by lysine 484, arginine 487, and histidine 516. 2 residues coordinate Mg(2+): aspartate 523 and aspartate 527. Positions aspartate 523–aspartate 527 match the DDXXD 2 motif. Arginine 532 is a binding site for dimethylallyl diphosphate. Arginine 533 provides a ligand contact to isopentenyl diphosphate. Lysine 610, threonine 611, glutamine 646, asparagine 653, lysine 663, and lysine 673 together coordinate dimethylallyl diphosphate.

It in the N-terminal section; belongs to the terpene synthase family. The protein in the C-terminal section; belongs to the FPP/GGPP synthase family.

It catalyses the reaction isopentenyl diphosphate + (2E,6E)-farnesyl diphosphate = (2E,6E,10E)-geranylgeranyl diphosphate + diphosphate. It carries out the reaction (2E,6E,10E)-geranylgeranyl diphosphate = talarodiene + diphosphate. The protein operates within secondary metabolite biosynthesis; terpenoid biosynthesis. Functionally, bifunctional type I diterpene synthase; part of the gene cluster that mediates the biosynthesis of talaronoid C, a fusicoccane diterpenoid with an unprecedented tricyclic 5/8/6 ring system. The first step in the pathway is performed by the fusicoccadiene synthase tndC that possesses both prenyl transferase and terpene cyclase activity, converting isopentenyl diphosphate and dimethylallyl diphosphate into geranylgeranyl diphosphate (GGDP) and further converting GGDP into talarodiene, a precursor for talaronoid C. The remaining enzymes from the cluster include the cytochrome P450 monooxygenase tndB, the aldehyde reductase tndE and the alcohol dehydrogenase tndF that are involved in the conversion of talarodiene into talaronoid C. The sequence is that of Bifunctional type I diterpene synthase tndC from Aspergillus flavipes.